Reading from the N-terminus, the 216-residue chain is Ras-related protein Rab-2B (216 aa).

GTP-binding residues include Gly-16, Val-17, Gly-18, Lys-19, Ser-20, Cys-21, and Thr-38. Ser-20 provides a ligand contact to Mg(2+). The Switch 1 signature appears at 37–42; it reads LTIGVE. 2 residues coordinate Mg(2+): Thr-38 and Asp-61. A Switch 2 motif is present at residues 63–72; it reads AGQESFRSIT. Residues Gly-64, Asn-119, Lys-120, Asp-122, Ala-150, and Lys-151 each coordinate GTP. Polar residues predominate over residues 189–207; sequence PQQSITSSVGPCSPQQNVS. The disordered stretch occupies residues 189 to 216; the sequence is PQQSITSSVGPCSPQQNVSDIGPDSGCC. Residues Cys-215 and Cys-216 are each lipidated (S-geranylgeranyl cysteine).

It belongs to the small GTPase superfamily. Rab family. As to quaternary structure, interacts (in GTP-bound form) with GARIN4 (via N-terminus). Interacts (in GTP-bound form) with GARIN5A. Interacts (in GTP-bound form) with GARIN1B. Interacts with VPS39 and VPS41. The cofactor is Mg(2+).

It is found in the cell membrane. It localises to the endoplasmic reticulum membrane. The protein resides in the golgi apparatus membrane. Its subcellular location is the cytoplasmic vesicle. The protein localises to the secretory vesicle. It is found in the acrosome. It localises to the autophagosome membrane. The catalysed reaction is GTP + H2O = GDP + phosphate + H(+). Its activity is regulated as follows. Regulated by guanine nucleotide exchange factors (GEFs) which promote the exchange of bound GDP for free GTP, GTPase activating proteins (GAPs) which increase the GTP hydrolysis activity, and GDP dissociation inhibitors (GDIs) which inhibit the dissociation of the nucleotide from the GTPase. The small GTPases Rab are key regulators of intracellular membrane trafficking, from the formation of transport vesicles to their fusion with membranes. Rabs cycle between active GTP-bound and inactive GDP-bound states. In their active state, drive transport of vesicular carriers from donor organelles to acceptor organelles to regulate the membrane traffic that maintains organelle identity and morphology. Regulates the compacted morphology of the Golgi. Promotes cytosolic DNA-induced innate immune responses. Regulates IFN responses against DNA viruses by regulating the CGAS-STING signaling axis. Together with RAB2A redundantly required for efficient autophagic flux. This chain is Ras-related protein Rab-2B (Rab2b), found in Mus musculus (Mouse).